The following is a 165-amino-acid chain: Putative 1,2-phenylacetyl-CoA epoxidase, subunit D (165 aa).

In terms of assembly, monomer.

It participates in aromatic compound metabolism; phenylacetate degradation. Possible component of 1,2-phenylacetyl-CoA epoxidase multicomponent enzyme system which catalyzes the reduction of phenylacetyl-CoA (PA-CoA) to form 1,2-epoxyphenylacetyl-CoA. The subunit D may have a function related to the maturation of the monooxygenase complex, rather than direct involvement in catalysis. PaaD could assist either in maturation of PaaE or PaaA. This Escherichia coli (strain K12) protein is Putative 1,2-phenylacetyl-CoA epoxidase, subunit D (paaD).